A 191-amino-acid chain; its full sequence is Inosine triphosphate pyrophosphatase (191 aa).

12–17 lines the ITP pocket; sequence TGNKNK. Glu40 contacts Mg(2+). ITP-binding positions include Lys52, 68 to 69, Lys85, 144 to 147, Lys167, and 172 to 173; these read DS, FGWE, and HR.

Belongs to the HAM1 NTPase family. Homodimer. Mg(2+) serves as cofactor. Mn(2+) is required as a cofactor.

The protein resides in the cytoplasm. It is found in the nucleus. The enzyme catalyses ITP + H2O = IMP + diphosphate + H(+). It carries out the reaction dITP + H2O = dIMP + diphosphate + H(+). The catalysed reaction is XTP + H2O = XMP + diphosphate + H(+). Its function is as follows. Pyrophosphatase that hydrolyzes non-canonical purine nucleotides such as inosine triphosphate (ITP), deoxyinosine triphosphate (dITP) or xanthosine 5'-triphosphate (XTP) to their respective monophosphate derivatives. The enzyme does not distinguish between the deoxy- and ribose forms. Probably excludes non-canonical purines from RNA and DNA precursor pools, thus preventing their incorporation into RNA and DNA and avoiding chromosomal lesions. The protein is Inosine triphosphate pyrophosphatase of Aspergillus oryzae (strain ATCC 42149 / RIB 40) (Yellow koji mold).